Here is a 231-residue protein sequence, read N- to C-terminus: Casparian strip membrane protein 1 (231 aa).

Residues 1–69 lie on the Cytoplasmic side of the membrane; that stretch reads MSTSETATVI…FRQSDRGSRC (69 aa). Residues 70-90 traverse the membrane as a helical segment; the sequence is LAFLDFLLRIAAFGPALAAAI. Over 91-117 the chain is Extracellular; the sequence is ATGTSDETLSVFTEFFQFRARFDDFPA. The helical transmembrane segment at 118-138 threads the bilayer; that stretch reads FLFLMVANAIAAGYLVLSLPF. At 139–152 the chain is on the cytoplasmic side; it reads SAVVVLRPQATGLR. A helical membrane pass occupies residues 153–173; the sequence is LLLLVCDTIMIGLLTAAAAAA. Residues 174 to 207 lie on the Extracellular side of the membrane; that stretch reads AAIVELAHNGNERANWVAICMQFHGFCQRTSGAV. The chain crosses the membrane as a helical span at residues 208–228; the sequence is VASFLSVFLFLLLVVLAAFAI. Topologically, residues 229 to 231 are cytoplasmic; that stretch reads RKR.

It belongs to the Casparian strip membrane proteins (CASP) family. Homodimer and heterodimers.

It is found in the cell membrane. Regulates membrane-cell wall junctions and localized cell wall deposition. Required for establishment of the Casparian strip membrane domain (CSD) and the subsequent formation of Casparian strips, a cell wall modification of the root endodermis that determines an apoplastic barrier between the intraorganismal apoplasm and the extraorganismal apoplasm and prevents lateral diffusion. The sequence is that of Casparian strip membrane protein 1 from Brachypodium distachyon (Purple false brome).